Reading from the N-terminus, the 89-residue chain is Sec-independent protein translocase protein TatA (89 aa).

Residues 1 to 21 form a helical membrane-spanning segment; it reads MGGISIWQLLIIAVIVVLLFG. The tract at residues 65-89 is disordered; sequence ADKQADTNQEQAKTEDAKRHDKEQV. The span at 76–89 shows a compositional bias: basic and acidic residues; the sequence is AKTEDAKRHDKEQV.

This sequence belongs to the TatA/E family. In terms of assembly, the Tat system comprises two distinct complexes: a TatABC complex, containing multiple copies of TatA, TatB and TatC subunits, and a separate TatA complex, containing only TatA subunits. Substrates initially bind to the TatABC complex, which probably triggers association of the separate TatA complex to form the active translocon.

The protein resides in the cell inner membrane. Functionally, part of the twin-arginine translocation (Tat) system that transports large folded proteins containing a characteristic twin-arginine motif in their signal peptide across membranes. TatA could form the protein-conducting channel of the Tat system. This Shigella flexneri protein is Sec-independent protein translocase protein TatA.